We begin with the raw amino-acid sequence, 444 residues long: Divalent metal cation transporter MntH (444 aa).

Transmembrane regions (helical) follow at residues 39 to 59 (LLFA…GNFA), 69 to 89 (GYTL…FQAL), 109 to 128 (FSRP…AMAT), 146 to 166 (LPLI…LLFE), 175 to 195 (LVIG…MFIA), 215 to 235 (TALT…AVYL), 264 to 284 (VILA…MAAS), 304 to 324 (TPLL…TSGI), 346 to 366 (IPVW…ILAG), 372 to 392 (ALVI…IALI), and 417 to 437 (AAAI…GFTI).

This sequence belongs to the NRAMP family.

Its subcellular location is the cell inner membrane. In terms of biological role, h(+)-stimulated, divalent metal cation uptake system. The sequence is that of Divalent metal cation transporter MntH from Granulibacter bethesdensis (strain ATCC BAA-1260 / CGDNIH1).